The chain runs to 360 residues: MFVARSIAADHKDLIHDVSFDFHGRRMATCSSDQSVKVWDKSESGDWHCTASWKTHSGSVWRVTWAHPEFGQVLASCSFDRTAAVWEEIVGESNDKLRGQSHWVKRTTLVDSRTSVTDVKFAPKHMGLMLATCSADGIVRIYEAPDVMNLSQWSLQHEISCKLSCSCISWNPSSSRAHSPMIAVGSDDSSPNAMAKVQIFEYNENTRKYAKAETLMTVTDPVHDIAFAPNLGRSFHILAIATKDVRIFTLKPVRKELTSSGGPTKFEIHIVAQFDNHNSQVWRVSWNITGTVLASSGDDGCVRLWKANYMDNWKCTGILKGNGSPVNGSSQQGTSNPSLGSTIPSLQNSLNGSSAGRKHS.

WD repeat units follow at residues 10–49, 55–96, 111–152, 160–210, 217–258, and 276–315; these read DHKD…DWHC, THSG…SNDK, DSRT…NLSQ, SCKL…RKYA, TVTD…KELT, and NHNS…NWKC. A Glycyl lysine isopeptide (Lys-Gly) (interchain with G-Cter in SUMO2) cross-link involves residue lysine 12. Phosphoserine is present on residues serine 179 and serine 190. Residues 324–354 are compositionally biased toward polar residues; the sequence is SPVNGSSQQGTSNPSLGSTIPSLQNSLNGSS. The interval 324-360 is disordered; sequence SPVNGSSQQGTSNPSLGSTIPSLQNSLNGSSAGRKHS.

Belongs to the WD repeat SEC13 family. Component of the Nup107-160 subcomplex of the nuclear pore complex (NPC). The Nup107-160 subcomplex includes NUP160, NUP133, NUP107, NUP98, NUP85, NUP43, NUP37, SEH1 and SEC13. The SEH1 subunit appears to be only weakly associated with the Nup107-160 subcomplex. Component of the GATOR2 subcomplex, composed of MIOS, SEC13, SEH1L, WDR24 and WDR59. The GATOR2 complex interacts with CASTOR1 and CASTOR2; the interaction is negatively regulated by arginine. The GATOR2 complex interacts with SESN1, SESN2 and SESN3; the interaction is negatively regulated by amino acids. SESN1, SESN2 and SESN3 convey leucine availability via direct interaction with SEH1L and WDR24.

Its subcellular location is the chromosome. It is found in the centromere. It localises to the kinetochore. The protein resides in the nucleus. The protein localises to the nuclear pore complex. Its subcellular location is the lysosome membrane. The GATOR2 complex is negatively regulated by the upstream amino acid sensors CASTOR1 and SESN2, which sequester the GATOR2 complex in absence of amino acids. In the presence of abundant amino acids, GATOR2 is released from CASTOR1 and SESN2 and activated. Functionally, component of the Nup107-160 subcomplex of the nuclear pore complex (NPC). The Nup107-160 subcomplex is required for the assembly of a functional NPC. The Nup107-160 subcomplex is also required for normal kinetochore microtubule attachment, mitotic progression and chromosome segregation. This subunit plays a role in recruitment of the Nup107-160 subcomplex to the kinetochore. Its function is as follows. As a component of the GATOR2 complex, functions as an activator of the amino acid-sensing branch of the mTORC1 signaling pathway. The GATOR2 complex indirectly activates mTORC1 through the inhibition of the GATOR1 subcomplex. GATOR2 probably acts as an E3 ubiquitin-protein ligase toward GATOR1. In the presence of abundant amino acids, the GATOR2 complex mediates ubiquitination of the NPRL2 core component of the GATOR1 complex, leading to GATOR1 inactivation. In the absence of amino acids, GATOR2 is inhibited, activating the GATOR1 complex. Within the GATOR2 complex, SEC13 and SEH1L are required to stabilize the complex. In Homo sapiens (Human), this protein is Nucleoporin SEH1 (SEH1L).